We begin with the raw amino-acid sequence, 128 residues long: Probable 4-amino-4-deoxy-L-arabinose-phosphoundecaprenol flippase subunit ArnF (128 aa).

The Cytoplasmic portion of the chain corresponds to 1-2; sequence MG. Residues 3-23 traverse the membrane as a helical segment; that stretch reads LMWGLFSVIIASAAQLSLGFA. The Periplasmic portion of the chain corresponds to 24–35; that stretch reads ASHLPPMTHLWD. A helical membrane pass occupies residues 36-56; it reads FIAALLAFGLDARILLLGLLG. At 57–76 the chain is on the cytoplasmic side; that stretch reads YLLSVFCWYKTLHKLALSKA. The chain crosses the membrane as a helical span at residues 77 to 97; the sequence is YALLSMSYVLVWIASMVLPGW. The Periplasmic segment spans residues 98-100; that stretch reads EGT. The helical transmembrane segment at 101-121 threads the bilayer; the sequence is FSLKALLGVACIMSGLMLIFL. Over 122–128 the chain is Cytoplasmic; sequence PTTKQRY.

Belongs to the ArnF family. In terms of assembly, heterodimer of ArnE and ArnF.

Its subcellular location is the cell inner membrane. It functions in the pathway bacterial outer membrane biogenesis; lipopolysaccharide biosynthesis. Translocates 4-amino-4-deoxy-L-arabinose-phosphoundecaprenol (alpha-L-Ara4N-phosphoundecaprenol) from the cytoplasmic to the periplasmic side of the inner membrane. This is Probable 4-amino-4-deoxy-L-arabinose-phosphoundecaprenol flippase subunit ArnF from Escherichia coli O127:H6 (strain E2348/69 / EPEC).